Consider the following 329-residue polypeptide: GDP-mannose transporter (329 aa).

Over 1–13 the chain is Cytoplasmic; sequence MSELKVDTGRLSH. Residues 14–34 form a helical membrane-spanning segment; the sequence is IANSGPMSILAYCASSILMTV. Topologically, residues 35-44 are lumenal; sequence TNKCVVGSDK. Residues 45–65 traverse the membrane as a helical segment; it reads FNMLFVMLFAQSLVCVTALVL. Residues 66 to 79 lie on the Cytoplasmic side of the membrane; it reads LKALGYVQYRPLNK. Residues 80–100 form a helical membrane-spanning segment; the sequence is VDVKNWLLISVLLVLMTYTSS. Over 101-109 the chain is Lumenal; the sequence is RALKYLAVP. A helical membrane pass occupies residues 110-130; the sequence is IYTIFKNLTIILIAYGEVLFF. Residues 131–133 lie on the Cytoplasmic side of the membrane; the sequence is GGR. Residues 134-154 traverse the membrane as a helical segment; sequence VTAMELSSFLLIVLSSVVATL. At 155-174 the chain is on the lumenal side; sequence GDQQALAKKPLAAAVESILG. The helical transmembrane segment at 175–195 threads the bilayer; sequence LNVGYFWMFTNCICSALFVLI. Over 196–214 the chain is Cytoplasmic; it reads MRKRIALTKFKDFDTMFYN. The helical transmembrane segment at 215–235 threads the bilayer; that stretch reads NILSLPLLMLASFMFEDWGAA. The Lumenal portion of the chain corresponds to 236-245; that stretch reads NIARNLTKDY. Asparagine 240 carries N-linked (GlcNAc...) asparagine glycosylation. Residues 246–266 traverse the membrane as a helical segment; sequence IIIMIISGLASVGISYCSGWC. At 267–273 the chain is on the cytoplasmic side; sequence VRVTSST. Residues 274–294 form a helical membrane-spanning segment; that stretch reads TYSMVGALNKLPIALSGLLFF. The Lumenal segment spans residues 295–298; that stretch reads DAPK. A helical transmembrane segment spans residues 299 to 319; the sequence is NFLSIFSIFLGFLSGIVYAVA. Residues 320 to 329 are Cytoplasmic-facing; the sequence is KQKKQSQPAN.

The protein belongs to the TPT transporter family. SLC35D subfamily. Homooligomer.

It localises to the golgi apparatus membrane. It is found in the cytoplasmic vesicle membrane. The protein resides in the endoplasmic reticulum membrane. Its function is as follows. Involved in the import of GDP-mannose from the cytoplasm into the Golgi lumen. This Eremothecium gossypii (strain ATCC 10895 / CBS 109.51 / FGSC 9923 / NRRL Y-1056) (Yeast) protein is GDP-mannose transporter (VRG4).